We begin with the raw amino-acid sequence, 459 residues long: D(1)-like dopamine receptor (459 aa).

Residues 1–23 (MAQNFSTVGDGKQMLLERDSSKR) lie on the Extracellular side of the membrane. Asn4 carries N-linked (GlcNAc...) asparagine glycosylation. The helical transmembrane segment at 24 to 49 (VLTGCFLSLLIFTTLLGNTLVCVAVT) threads the bilayer. Topologically, residues 50 to 60 (KFRHLRSKVTN) are cytoplasmic. Residues 61–87 (FFVISLAISDLLVAILVMPWKAATEIM) form a helical membrane-spanning segment. Over 88–96 (GFWPFGEFC) the chain is Extracellular. A disulfide bond links Cys96 and Cys187. A helical membrane pass occupies residues 97–119 (NIWVAFDIMCSTASILNLCVISV). Over 120-138 (DRYWAISSPFRYERKMTPK) the chain is Cytoplasmic. The chain crosses the membrane as a helical span at residues 139 to 164 (VACLMISVAWTLSVLISFIPVQLNWH). Residues 165-191 (KAQTASYVELNGTYAGDLPPDNCDSSL) are Extracellular-facing. The helical transmembrane segment at 192–216 (NRTYAISSSLISFYIPVAIMIVTYT) threads the bilayer. Topologically, residues 217–269 (RIYRIAQKQIRRISALERAAESAQNRHSSMGNSLSMESECSFKMSFKRETKVL) are cytoplasmic. Residues 270-297 (KTLSVIMGVFVCCWLPFFILNCMVPFCE) traverse the membrane as a helical segment. At 298–311 (ADDTTDFPCISSTT) the chain is on the extracellular side. Residues 312-333 (FDVFVWFGWANSSLNPIIYAFN) traverse the membrane as a helical segment. At 334 to 459 (ADFRKAFSIL…QNGQHKSMSC (126 aa)) the chain is on the cytoplasmic side.

The protein belongs to the G-protein coupled receptor 1 family.

It is found in the cell membrane. The protein localises to the cell projection. The protein resides in the cilium membrane. Functionally, receptor for dopamine. This is D(1)-like dopamine receptor (d14) from Takifugu rubripes (Japanese pufferfish).